The following is a 64-amino-acid chain: Relaxin (64 aa).

3 cysteine pairs are disulfide-bonded: C11/C51, C23/C64, and C50/C55.

Belongs to the insulin family. Heterodimer of a B chain and an A chain linked by two disulfide bonds.

The protein localises to the secreted. The polypeptide is Relaxin (Leucoraja erinaceus (Little skate)).